A 232-amino-acid chain; its full sequence is 5'-methylthioadenosine/S-adenosylhomocysteine nucleosidase (232 aa).

The active-site Proton acceptor is Glu12. Substrate contacts are provided by residues Gly78, Ile152, and 173 to 174 (ME). The active-site Proton donor is Asp197.

This sequence belongs to the PNP/UDP phosphorylase family. MtnN subfamily. In terms of assembly, homodimer.

It carries out the reaction S-adenosyl-L-homocysteine + H2O = S-(5-deoxy-D-ribos-5-yl)-L-homocysteine + adenine. The catalysed reaction is S-methyl-5'-thioadenosine + H2O = 5-(methylsulfanyl)-D-ribose + adenine. The enzyme catalyses 5'-deoxyadenosine + H2O = 5-deoxy-D-ribose + adenine. Its pathway is amino-acid biosynthesis; L-methionine biosynthesis via salvage pathway; S-methyl-5-thio-alpha-D-ribose 1-phosphate from S-methyl-5'-thioadenosine (hydrolase route): step 1/2. In terms of biological role, catalyzes the irreversible cleavage of the glycosidic bond in both 5'-methylthioadenosine (MTA) and S-adenosylhomocysteine (SAH/AdoHcy) to adenine and the corresponding thioribose, 5'-methylthioribose and S-ribosylhomocysteine, respectively. Also cleaves 5'-deoxyadenosine, a toxic by-product of radical S-adenosylmethionine (SAM) enzymes, into 5-deoxyribose and adenine. Thus, is required for in vivo function of the radical SAM enzymes biotin synthase and lipoic acid synthase, that are inhibited by 5'-deoxyadenosine accumulation. The protein is 5'-methylthioadenosine/S-adenosylhomocysteine nucleosidase of Escherichia fergusonii (strain ATCC 35469 / DSM 13698 / CCUG 18766 / IAM 14443 / JCM 21226 / LMG 7866 / NBRC 102419 / NCTC 12128 / CDC 0568-73).